Reading from the N-terminus, the 382-residue chain is 4-hydroxybutyrate dehydrogenase (382 aa).

NAD(+) contacts are provided by residues Asp37, Asn67, 94 to 98 (GSSID), 138 to 142 (TTSGT), and Lys159. Fe cation contacts are provided by Asp193, His197, His261, and His280. His280 contacts NAD(+).

It belongs to the iron-containing alcohol dehydrogenase family. Fe cation serves as cofactor.

It carries out the reaction 4-hydroxybutanoate + NAD(+) = succinate semialdehyde + NADH + H(+). With respect to regulation, shows competitive inhibition of GHBDH activity by the product succinic semialdehyde, and non-competitive inhibitions by the three other substrate-product combinations. The conversion of GHB to SSA is activated by two different saturating purified nudix hydrolases, B.methanolicus activator ACT and E.coli NudF. The nudix hydrolases do not activate the reverse reaction. Its function is as follows. Involved in the degradation of 4-hydroxybutyrate. Catalyzes the interconversion of gamma-hydroxybutyrate (GHB) and succinic semialdehyde (SSA). The chain is 4-hydroxybutyrate dehydrogenase from Cupriavidus necator (Alcaligenes eutrophus).